The following is a 250-amino-acid chain: MKILLSNDDGVYAQGIHALADALRDLAEIVIVAPDRNRSGASNSLTLEHPLRVSQIAENTYSVQGTPTDCVHFALNELMKDALPDLVLSGINHGANLGDDVLYSGTVAAAMEGHFLGVQSIAFSLAGTTHFASAAHFVRQLVEQHLANPIPTNRLLNVNIPDRPLELIQGIEVTRLGARHHAESMIKQKDPRGHDIYWLGPPGKEQDAGPGTDFHAIERGWVSLTPLQVDLTAHESLRSMDHWLKEKVNG.

The a divalent metal cation site is built by aspartate 8, aspartate 9, serine 39, and asparagine 92.

The protein belongs to the SurE nucleotidase family. A divalent metal cation is required as a cofactor.

It is found in the cytoplasm. The enzyme catalyses a ribonucleoside 5'-phosphate + H2O = a ribonucleoside + phosphate. Functionally, nucleotidase that shows phosphatase activity on nucleoside 5'-monophosphates. In Vibrio cholerae serotype O1 (strain ATCC 39315 / El Tor Inaba N16961), this protein is 5'-nucleotidase SurE.